The chain runs to 214 residues: Thioredoxin-like 4, chloroplastic (214 aa).

The span at 1-20 (MITASLLPLPATSSSSGRRS) shows a compositional bias: low complexity. Residues 1-68 (MITASLLPLP…STNGSLPGLP (68 aa)) are disordered. The transit peptide at 1 to 71 (MITASLLPLP…GSLPGLPPVV (71 aa)) directs the protein to the chloroplast. Positions 21–34 (LPPPTTTFPRPPPP) are enriched in pro residues. Low complexity predominate over residues 42-53 (SSSSSSASSTES). The Thioredoxin domain occupies 72-199 (VEEEEEEFCP…IIAAIQKYTA (128 aa)). Active-site nucleophile residues include C117 and C120. The cysteines at positions 117 and 120 are disulfide-linked.

The protein belongs to the thioredoxin family.

The protein localises to the plastid. The protein resides in the chloroplast. Functionally, probable thiol-disulfide oxidoreductase that may participate in various redox reactions. In Oryza sativa subsp. japonica (Rice), this protein is Thioredoxin-like 4, chloroplastic.